Here is a 193-residue protein sequence, read N- to C-terminus: dCTP deaminase (193 aa).

Residues 110–115, aspartate 128, 136–138, tyrosine 171, lysine 178, and glutamine 182 each bind dCTP; these read RSSLAR and VLE. Glutamate 138 functions as the Proton donor/acceptor in the catalytic mechanism.

This sequence belongs to the dCTP deaminase family. Homotrimer.

It catalyses the reaction dCTP + H2O + H(+) = dUTP + NH4(+). Its pathway is pyrimidine metabolism; dUMP biosynthesis; dUMP from dCTP (dUTP route): step 1/2. Catalyzes the deamination of dCTP to dUTP. The protein is dCTP deaminase of Escherichia coli (strain K12 / MC4100 / BW2952).